The following is a 365-amino-acid chain: Phosphatidylcholine:ceramide cholinephosphotransferase 2 (365 aa).

The segment at 9–50 is disordered; that stretch reads LEGHLESQTNNSTNTYTSPTEAVEEEDKNGKGKPKTLSNGLR. A compositionally biased stretch (low complexity) spans 15 to 28; that stretch reads SQTNNSTNTYTSPT. 5 helical membrane passes run 80-100, 128-148, 159-179, 219-239, and 248-268; these read GIAF…ITVV, FSVS…QWLF, FFFI…VTTL, ILCG…TYLF, and FWWY…CILV. His-229 is a catalytic residue. Active-site residues include His-272 and Asp-276. A helical transmembrane segment spans residues 273-290; the sequence is YTVDVIIAYYITTRLFWW. Residues 291-365 lie on the Cytoplasmic side of the membrane; that stretch reads YHSMANEKNL…KIGEDNEKST (75 aa). 4 S-palmitoyl cysteine lipidation sites follow: Cys-331, Cys-332, Cys-343, and Cys-348.

It belongs to the sphingomyelin synthase family. In terms of processing, palmitoylated on Cys-331, Cys-332, Cys-343 and Cys-348; which plays an important role in plasma membrane localization. As to expression, expression restricted to late round spermatids and elongating spermatids but not detected in late elongate spermatids and Sertoli cells (at protein level).

It is found in the cell membrane. The protein localises to the golgi apparatus membrane. The enzyme catalyses an N-acylsphing-4-enine + a 1,2-diacyl-sn-glycero-3-phosphocholine = a sphingomyelin + a 1,2-diacyl-sn-glycerol. The catalysed reaction is an N-acylsphinganine + a 1,2-diacyl-sn-glycero-3-phosphocholine = an N-acylsphinganine-1-phosphocholine + a 1,2-diacyl-sn-glycerol. It catalyses the reaction an N-acyl-(4R)-4-hydroxysphinganine + a 1,2-diacyl-sn-glycero-3-phosphocholine = an N-acyl-(4R)-4-hydroxysphinganine-phosphocholine + a 1,2-diacyl-sn-glycerol. It carries out the reaction an N-acylsphing-4-enine + a 1,2-diacyl-sn-glycero-3-phosphoethanolamine = an N-acylsphing-4-enine 1-phosphoethanolamine + a 1,2-diacyl-sn-glycerol. The enzyme catalyses an N-acylsphinganine + a 1,2-diacyl-sn-glycero-3-phosphoethanolamine = an N-acylsphinganine-1-phosphoethanolamine + a 1,2-diacyl-sn-glycerol. The catalysed reaction is an N-acyl-(4R)-4-hydroxysphinganine + a 1,2-diacyl-sn-glycero-3-phosphoethanolamine = an N-acyl-(4R)-4-hydroxysphinganine-1-phosphoethanolamine + a 1,2-diacyl-sn-glycerol. It catalyses the reaction 1,2-dihexadecanoyl-sn-glycero-3-phosphocholine + an N-acylsphing-4-enine = 1,2-dihexadecanoyl-sn-glycerol + a sphingomyelin. It carries out the reaction 1-(9Z-octadecenoyl)-2-acyl-sn-3-glycerol + a sphingomyelin = a 1-(9Z-octadecenoyl)-2-acyl-sn-glycero-3-phosphocholine + an N-acylsphing-4-enine. The enzyme catalyses N-hexadecanoylsphinganine + a 1,2-diacyl-sn-glycero-3-phosphocholine = N-hexadecanoyl-sphinganine-1-phosphocholine + a 1,2-diacyl-sn-glycerol. The catalysed reaction is N-hexadecanoyl-(4R)-hydroxysphinganine + a 1,2-diacyl-sn-glycero-3-phosphocholine = N-hexadecanoyl-(4R)-hydroxysphinganine-phosphocholine + a 1,2-diacyl-sn-glycerol. It catalyses the reaction N-hexadecanoylsphinganine + a 1,2-diacyl-sn-glycero-3-phosphoethanolamine = N-hexadecanoyl-sphinganine-1-phosphoethanolamine + a 1,2-diacyl-sn-glycerol. It carries out the reaction N-hexadecanoyl-(4R)-hydroxysphinganine + a 1,2-diacyl-sn-glycero-3-phosphoethanolamine = N-hexadecanoyl-(4R)-hydroxysphinganine-1-phosphoethanolamine + a 1,2-diacyl-sn-glycerol. Its pathway is sphingolipid metabolism. Sphingomyelin synthase that primarily contributes to sphingomyelin synthesis and homeostasis at the plasma membrane. Catalyzes the reversible transfer of phosphocholine moiety in sphingomyelin biosynthesis: in the forward reaction transfers phosphocholine head group of phosphatidylcholine (PC) on to ceramide (CER) to form ceramide phosphocholine (sphingomyelin, SM) and diacylglycerol (DAG) as by-product, and in the reverse reaction transfers phosphocholine from SM to DAG to form PC and CER. The direction of the reaction appears to depend on the levels of CER and DAG in the plasma membrane. Does not use free phosphorylcholine or CDP-choline as donors. Can also transfer phosphoethanolamine head group of phosphatidylethanolamine (PE) on to ceramide (CER) to form ceramide phosphoethanolamine (CPE). Regulates receptor-mediated signal transduction via mitogenic DAG and proapoptotic CER, as well as via SM, a structural component of membrane rafts that serve as platforms for signal transduction and protein sorting. To a lesser extent, plays a role in secretory transport via regulation of DAG pool at the Golgi apparatus and its downstream effects on PRKD1. Required for normal bone matrix mineralization. This is Phosphatidylcholine:ceramide cholinephosphotransferase 2 (Sgms2) from Rattus norvegicus (Rat).